A 482-amino-acid polypeptide reads, in one-letter code: Glycogen synthase 2 (482 aa).

Position 18 (lysine 18) interacts with ADP-alpha-D-glucose.

This sequence belongs to the glycosyltransferase 1 family. Bacterial/plant glycogen synthase subfamily.

The enzyme catalyses [(1-&gt;4)-alpha-D-glucosyl](n) + ADP-alpha-D-glucose = [(1-&gt;4)-alpha-D-glucosyl](n+1) + ADP + H(+). It functions in the pathway glycan biosynthesis; glycogen biosynthesis. In terms of biological role, synthesizes alpha-1,4-glucan chains using ADP-glucose. The chain is Glycogen synthase 2 from Bradyrhizobium diazoefficiens (strain JCM 10833 / BCRC 13528 / IAM 13628 / NBRC 14792 / USDA 110).